Here is a 312-residue protein sequence, read N- to C-terminus: NAD(P)(+)--arginine ADP-ribosyltransferase 2 (312 aa).

A signal peptide spans 1–20; that stretch reads MELLALRWVLLAGTLLSTSA. A propeptide spanning residues 21–31 is cleaved from the precursor; it reads ASSALQEGDLG. 2 cysteine pairs are disulfide-bonded: C51/C260 and C159/C208. In terms of domain architecture, TR mART core spans 71-256; it reads YAYAVGWRKA…IYLRSKGKMS (186 aa). NAD(+)-binding residues include Y108, R164, and Q183. Residue R164 is part of the active site. S186 is an active-site residue. S217 is an NAD(+) binding site. Residue E224 is part of the active site. Residues 267–312 constitute a propeptide that is removed on maturation; sequence GGQWGRGHQEVGLGLSPGLALPVLPCSNCSCWGSGHRAGDPIPAAV.

Belongs to the Arg-specific ADP-ribosyltransferase family.

It localises to the secreted. The protein localises to the extracellular space. It carries out the reaction L-arginyl-[protein] + NAD(+) = N(omega)-(ADP-D-ribosyl)-L-arginyl-[protein] + nicotinamide + H(+). The polypeptide is NAD(P)(+)--arginine ADP-ribosyltransferase 2 (Gallus gallus (Chicken)).